The chain runs to 450 residues: CBL-interacting protein kinase 23 (450 aa).

One can recognise a Protein kinase domain in the interval 13–268 (YELGRTLGEG…IAELINNEWF (256 aa)). ATP contacts are provided by residues 19 to 27 (LGEGTFAKV) and Lys42. Residue Asp136 is the Proton acceptor of the active site. The interval 154-183 (DFGLSALSQQVREDGLLHTTCGTPNYVAPE) is activation loop. An NAF domain is found at 306 to 331 (EERPSVMNAFELISTSQGLNLGTLFE). The tract at residues 339-368 (KRETRFASRLPANEILSKIEAAAGPMGFNV) is PPI.

Belongs to the protein kinase superfamily. CAMK Ser/Thr protein kinase family. SNF1 subfamily. The cofactor is Mn(2+).

The catalysed reaction is L-seryl-[protein] + ATP = O-phospho-L-seryl-[protein] + ADP + H(+). It carries out the reaction L-threonyl-[protein] + ATP = O-phospho-L-threonyl-[protein] + ADP + H(+). In terms of biological role, CIPK serine-threonine protein kinases interact with CBL proteins. Binding of a CBL protein to the regulatory NAF domain of CIPK protein lead to the activation of the kinase in a calcium-dependent manner. This chain is CBL-interacting protein kinase 23 (CIPK23), found in Oryza sativa subsp. japonica (Rice).